The primary structure comprises 393 residues: S-adenosylmethionine synthase (393 aa).

An ATP-binding site is contributed by H16. Mg(2+) is bound at residue D18. E44 provides a ligand contact to K(+). Positions 57 and 100 each coordinate L-methionine. Residues 100–110 are flexible loop; the sequence is QSNDIAQGVDH. ATP contacts are provided by residues 167–169, 238–239, D247, 253–254, A270, and K274; these read DAK, RF, and RK. Residue D247 coordinates L-methionine. Residue K278 coordinates L-methionine.

Belongs to the AdoMet synthase family. As to quaternary structure, homotetramer; dimer of dimers. Mg(2+) serves as cofactor. The cofactor is K(+).

It localises to the cytoplasm. The catalysed reaction is L-methionine + ATP + H2O = S-adenosyl-L-methionine + phosphate + diphosphate. The protein operates within amino-acid biosynthesis; S-adenosyl-L-methionine biosynthesis; S-adenosyl-L-methionine from L-methionine: step 1/1. Its function is as follows. Catalyzes the formation of S-adenosylmethionine (AdoMet) from methionine and ATP. The overall synthetic reaction is composed of two sequential steps, AdoMet formation and the subsequent tripolyphosphate hydrolysis which occurs prior to release of AdoMet from the enzyme. In Acidovorax ebreus (strain TPSY) (Diaphorobacter sp. (strain TPSY)), this protein is S-adenosylmethionine synthase.